Reading from the N-terminus, the 265-residue chain is Undecaprenyl-diphosphatase (265 aa).

The next 8 membrane-spanning stretches (helical) occupy residues 15-37 (GLTE…LLEY), 41-61 (KAES…VFLY), 85-105 (YLLA…HSFI), 109-129 (LFGP…ILAV), 144-164 (VSPA…WPGF), 183-203 (LAAE…TGYD), 218-238 (FWAV…KGFI), and 244-264 (VTFR…LLFW).

Belongs to the UppP family.

Its subcellular location is the cell inner membrane. The catalysed reaction is di-trans,octa-cis-undecaprenyl diphosphate + H2O = di-trans,octa-cis-undecaprenyl phosphate + phosphate + H(+). In terms of biological role, catalyzes the dephosphorylation of undecaprenyl diphosphate (UPP). Confers resistance to bacitracin. This is Undecaprenyl-diphosphatase from Oleidesulfovibrio alaskensis (strain ATCC BAA-1058 / DSM 17464 / G20) (Desulfovibrio alaskensis).